The chain runs to 1551 residues: ABC-type transporter phomO (1551 aa).

7 helical membrane-spanning segments follow: residues 34–54 (LYFE…LLAA), 110–130 (CTAG…CTTV), 139–159 (SVPA…LAHF), 172–192 (SSSL…APLV), 202–222 (GSAL…LIAV), 314–334 (LGLY…FTLA), and 358–378 (GLIG…GWYW). Residues 326 to 599 (LCLAGFTLAQ…LLQIIPSFGA (274 aa)) enclose the ABC transmembrane type-1 1 domain. An N-linked (GlcNAc...) asparagine glycan is attached at Asn-384. A run of 4 helical transmembrane segments spans residues 428–448 (LAYA…TWML), 452–472 (VGPP…ASTY), 535–555 (LIVG…VLVF), and 577–597 (LIWI…IPSF). One can recognise an ABC transporter 1 domain in the interval 645 to 861 (IHNSSFSYTD…VEDENGDVDN (217 aa)). N-linked (GlcNAc...) asparagine glycosylation is present at Asn-647. 678-685 (GPAGCGKS) contacts ATP. N-linked (GlcNAc...) asparagine glycosylation is present at Asn-721. Positions 843–889 (YQFPPSQADVEDENGDVDNGAENTRPRESSHTTEAQSGPPEPKSKPT) are disordered. 4 helical membrane-spanning segments follow: residues 903–923 (SIGF…AFCL), 959–979 (VLPL…IVPL), 1027–1044 (LFNT…VILI), and 1137–1157 (LVLN…AVGL). Positions 910 to 1199 (VLFIGGGIIF…LLTAWTSLET (290 aa)) constitute an ABC transmembrane type-1 2 domain. N-linked (GlcNAc...) asparagine glycosylation is present at Asn-1179. Over residues 1219–1228 (DVLVRPDSLD) the composition is skewed to basic and acidic residues. A disordered region spans residues 1219 to 1296 (DVLVRPDSLD…HEATTITTTS (78 aa)). Acidic residues predominate over residues 1259–1270 (YDDDDESDENTD). One can recognise an ABC transporter 2 domain in the interval 1287–1535 (HEATTITTTS…SDIFAFFGRS (249 aa)). 1323 to 1330 (GRTGSGKS) provides a ligand contact to ATP. An N-linked (GlcNAc...) asparagine glycan is attached at Asn-1486.

The protein belongs to the ABC transporter superfamily. ABCC family. Conjugate transporter (TC 3.A.1.208) subfamily.

It is found in the membrane. Functionally, ABC-type transporter; part of the gene cluster that mediates the biosynthesis of the phomopsins, a group of hexapeptide mycotoxins which infects lupins and causes lupinosis disease in livestock. This chain is ABC-type transporter phomO, found in Diaporthe leptostromiformis (Lupinosis disease fungus).